A 68-amino-acid polypeptide reads, in one-letter code: Basic phospholipase A2 homolog BdipTx-I (68 aa).

Cysteines 28 and 44 form a disulfide.

It belongs to the phospholipase A2 family. Group II subfamily. K49 sub-subfamily. Expressed by the venom gland.

The protein resides in the secreted. In terms of biological role, snake venom phospholipase A2 (PLA2) that lacks enzymatic activity. Is myotoxic, induces edema, and causes systemic effects (renal changes that lead to proteinuria) on mice. A model of myotoxic mechanism has been proposed: an apo Lys49-PLA2 is activated by the entrance of a hydrophobic molecule (e.g. fatty acid) at the hydrophobic channel of the protein leading to a reorientation of a monomer. This reorientation causes a transition between 'inactive' to 'active' states, causing alignment of C-terminal and membrane-docking sites (MDoS) side-by-side and putting the membrane-disruption sites (MDiS) in the same plane, exposed to solvent and in a symmetric position for both monomers. The MDoS region stabilizes the toxin on membrane by the interaction of charged residues with phospholipid head groups. Subsequently, the MDiS region destabilizes the membrane with penetration of hydrophobic residues. This insertion causes a disorganization of the membrane, allowing an uncontrolled influx of ions (i.e. calcium and sodium), and eventually triggering irreversible intracellular alterations and cell death. In Bothrops diporus (Chaco lancehead), this protein is Basic phospholipase A2 homolog BdipTx-I.